Reading from the N-terminus, the 239-residue chain is tRNA (guanine-N(7)-)-methyltransferase (239 aa).

S-adenosyl-L-methionine is bound by residues E69, E94, D121, and D144. D144 is a catalytic residue. Residues K148, D180, and 217–220 each bind substrate; that span reads TNFE.

Belongs to the class I-like SAM-binding methyltransferase superfamily. TrmB family. Monomer.

The enzyme catalyses guanosine(46) in tRNA + S-adenosyl-L-methionine = N(7)-methylguanosine(46) in tRNA + S-adenosyl-L-homocysteine. The protein operates within tRNA modification; N(7)-methylguanine-tRNA biosynthesis. In terms of biological role, catalyzes the formation of N(7)-methylguanine at position 46 (m7G46) in tRNA. In Buchnera aphidicola subsp. Schizaphis graminum (strain Sg), this protein is tRNA (guanine-N(7)-)-methyltransferase.